The chain runs to 433 residues: KICSTOR complex protein ITFG2 (433 aa).

One copy of the FG-GAP 1; atypical repeat lies at 19-48 (FPHAICLGDVDNDTLNELVVGDTSGKVSVY). Serine 104 carries the phosphoserine modification. The FG-GAP 2; atypical repeat unit spans residues 126–155 (NTKVMLISDIDGDGCRELVVGYTDRVVRAF). Serine 220 is modified (phosphoserine).

Part of the KICSTOR complex composed of KPTN, ITFG2, KICS2 and SZT2. SZT2 probably serves as a link between the other three proteins in the KICSTOR complex and may mediate the direct interaction with the GATOR complex via GATOR1. The KICSTOR complex interacts directly with the GATOR1 complex and most probably indirectly with the GATOR2 complex in an amino acid-independent manner.

The protein resides in the lysosome membrane. Its function is as follows. As part of the KICSTOR complex functions in the amino acid-sensing branch of the TORC1 signaling pathway. Recruits, in an amino acid-independent manner, the GATOR1 complex to the lysosomal membranes and allows its interaction with GATOR2 and the RAG GTPases. Functions upstream of the RAG GTPases and is required to negatively regulate mTORC1 signaling in absence of amino acids. In absence of the KICSTOR complex mTORC1 is constitutively localized to the lysosome and activated. The KICSTOR complex is also probably involved in the regulation of mTORC1 by glucose. In Pongo abelii (Sumatran orangutan), this protein is KICSTOR complex protein ITFG2.